Consider the following 244-residue polypeptide: MKIDLNADLGEGCVSDVELLTLVSSANIACGFHAGDAQTMQACVREAIKNGVAIGAHPSYPDRENFGRSAMQLPPETVFAQTLYQIGALAAIARAQGGVMCHVKPHGMLYNQAAKEAQLADAIARAVYACDPALILVGLAGSELIRAGERYGLVTREEVFADRGYQADGSLVPRSQPGALIENEEQALAQTLEMVQHGRVKSITGEWATVTAQTVCLHGDGEHALAFARRLRATFAEKGIVVAA.

It belongs to the LamB/PxpA family. As to quaternary structure, forms a complex composed of PxpA, PxpB and PxpC.

The catalysed reaction is 5-oxo-L-proline + ATP + 2 H2O = L-glutamate + ADP + phosphate + H(+). Functionally, catalyzes the cleavage of 5-oxoproline to form L-glutamate coupled to the hydrolysis of ATP to ADP and inorganic phosphate. This chain is 5-oxoprolinase subunit A, found in Escherichia coli O7:K1 (strain IAI39 / ExPEC).